The primary structure comprises 298 residues: WRKY transcription factor 22 (298 aa).

Disordered regions lie at residues 75-116 and 181-220; these read EEPR…IQHK and AEHN…TYSS. A compositionally biased stretch (low complexity) spans 88-103; sequence SLSASSGSVTSKPSGS. Positions 107–116 are enriched in basic residues; that stretch reads RSKRRKIQHK. The segment at residues 122–188 is a DNA-binding region (WRKY); it reads AAEALNSDVW…YTAEHNHPAP (67 aa). Residues 190-220 show a composition bias toward polar residues; the sequence is HRNSLAGSTRQKPSDQQTSKSPTTTIATYSS.

This sequence belongs to the WRKY group II-e family.

It is found in the nucleus. Functionally, transcription factor involved in the expression of defense genes in innate immune response of plants. Interacts specifically with the W box (5'-(T)TGAC[CT]-3'), a frequently occurring elicitor-responsive cis-acting element. Activates WRKY 29, SIRK and its own promoters. The protein is WRKY transcription factor 22 (WRKY22) of Arabidopsis thaliana (Mouse-ear cress).